We begin with the raw amino-acid sequence, 335 residues long: Cytoskeleton protein RodZ (335 aa).

Over 1-111 (MNTEATHDQN…LGKRRKKRDG (111 aa)) the chain is Cytoplasmic. The 53-residue stretch at 19–71 (LRNAREQLGLSQQAVAERLCLKVSTVRDIEEDKAPADLASTFLRGYIRSYARL) folds into the HTH cro/C1-type domain. The H-T-H motif DNA-binding region spans 30–49 (QQAVAERLCLKVSTVRDIEE). Residues 112–132 (WLMTFTWLVLFVVIGLSGAWW) traverse the membrane as a helical; Signal-anchor for type II membrane protein segment. The Periplasmic portion of the chain corresponds to 133–335 (WQDHKAQQEE…TLNAEQSPAQ (203 aa)). Polar residues predominate over residues 148–164 (DQSSAELNNNQSQSVPL). Residues 148–244 (DQSSAELNNN…PLPTDQAGVT (97 aa)) are disordered. Low complexity-rich tracts occupy residues 165 to 205 (DTST…DPQQ) and 217 to 239 (DTAA…LPTD).

This sequence belongs to the RodZ family.

Its subcellular location is the cell inner membrane. In terms of biological role, cytoskeletal protein that is involved in cell-shape control through regulation of the length of the long axis. This chain is Cytoskeleton protein RodZ, found in Escherichia coli O81 (strain ED1a).